Consider the following 330-residue polypeptide: MTTAIGKKTTKLEPFKMERGVKYRDAAKTSVIQVRNIDPDQELLKKPEWMKIKLPTNSAKIDSIKYGMRRHGLHSVCEEASCPNLHECFNHGTATFMIMGAICTRRCPFCDVAHGKPLPLDPYEPRKVAETVQDMKLKYVVITSVDRDDLADRGAAHFAATVREIKALNPECKVEILVPDFRGRVEQAVAILKQNPPDVFNHNLENVPRLYREIRPGADYKWSLELLKIFKQEFPNIPTKSGLMVGLGETNEEILAVMQDLRDHGVTMLTVGQYLQPSRHHLRVERYVPPAEFEMFRSEAEKMGFEHAACGPFVRSSYHADLQAKGELVK.

Positions 77, 82, 88, 103, 107, 110, and 317 each coordinate [4Fe-4S] cluster. The 218-residue stretch at 89 to 306 folds into the Radical SAM core domain; the sequence is FNHGTATFMI…RSEAEKMGFE (218 aa).

Belongs to the radical SAM superfamily. Lipoyl synthase family. [4Fe-4S] cluster serves as cofactor.

It is found in the cytoplasm. It carries out the reaction [[Fe-S] cluster scaffold protein carrying a second [4Fe-4S](2+) cluster] + N(6)-octanoyl-L-lysyl-[protein] + 2 oxidized [2Fe-2S]-[ferredoxin] + 2 S-adenosyl-L-methionine + 4 H(+) = [[Fe-S] cluster scaffold protein] + N(6)-[(R)-dihydrolipoyl]-L-lysyl-[protein] + 4 Fe(3+) + 2 hydrogen sulfide + 2 5'-deoxyadenosine + 2 L-methionine + 2 reduced [2Fe-2S]-[ferredoxin]. It functions in the pathway protein modification; protein lipoylation via endogenous pathway; protein N(6)-(lipoyl)lysine from octanoyl-[acyl-carrier-protein]: step 2/2. In terms of biological role, catalyzes the radical-mediated insertion of two sulfur atoms into the C-6 and C-8 positions of the octanoyl moiety bound to the lipoyl domains of lipoate-dependent enzymes, thereby converting the octanoylated domains into lipoylated derivatives. In Haemophilus ducreyi (strain 35000HP / ATCC 700724), this protein is Lipoyl synthase.